The chain runs to 293 residues: Ribosomal protein L11 methyltransferase (293 aa).

S-adenosyl-L-methionine-binding residues include T145, G166, D188, and N230.

Belongs to the methyltransferase superfamily. PrmA family.

It localises to the cytoplasm. It carries out the reaction L-lysyl-[protein] + 3 S-adenosyl-L-methionine = N(6),N(6),N(6)-trimethyl-L-lysyl-[protein] + 3 S-adenosyl-L-homocysteine + 3 H(+). Methylates ribosomal protein L11. This Erwinia tasmaniensis (strain DSM 17950 / CFBP 7177 / CIP 109463 / NCPPB 4357 / Et1/99) protein is Ribosomal protein L11 methyltransferase.